We begin with the raw amino-acid sequence, 61 residues long: Calprismin (61 aa).

In terms of processing, glycosylated. In terms of tissue distribution, expressed by the calcifying mantle epithelium and incorporated into the shell's calcitic prismatic layer.

This is Calprismin from Pinna nobilis (Noble pen shell).